A 713-amino-acid chain; its full sequence is Glycine--tRNA ligase beta subunit (713 aa).

The protein belongs to the class-II aminoacyl-tRNA synthetase family. As to quaternary structure, tetramer of two alpha and two beta subunits.

Its subcellular location is the cytoplasm. It carries out the reaction tRNA(Gly) + glycine + ATP = glycyl-tRNA(Gly) + AMP + diphosphate. In Picosynechococcus sp. (strain ATCC 27264 / PCC 7002 / PR-6) (Agmenellum quadruplicatum), this protein is Glycine--tRNA ligase beta subunit.